Here is a 339-residue protein sequence, read N- to C-terminus: Fructose-1,6-bisphosphatase class 1 (339 aa).

Mg(2+) is bound by residues Glu94, Asp116, Leu118, and Asp119. Residues 119 to 122, Asn210, and Lys276 contribute to the substrate site; that span reads DGSS. Glu282 is a binding site for Mg(2+).

Belongs to the FBPase class 1 family. Homotetramer. Mg(2+) is required as a cofactor.

The protein resides in the cytoplasm. It carries out the reaction beta-D-fructose 1,6-bisphosphate + H2O = beta-D-fructose 6-phosphate + phosphate. It functions in the pathway carbohydrate biosynthesis; gluconeogenesis. This is Fructose-1,6-bisphosphatase class 1 from Burkholderia ambifaria (strain MC40-6).